Reading from the N-terminus, the 409-residue chain is Peptidase T (409 aa).

H78 lines the Zn(2+) pocket. The active site involves D80. D140 is a binding site for Zn(2+). Residue E173 is the Proton acceptor of the active site. 3 residues coordinate Zn(2+): E174, D196, and H379.

Belongs to the peptidase M20B family. The cofactor is Zn(2+).

It localises to the cytoplasm. The enzyme catalyses Release of the N-terminal residue from a tripeptide.. Cleaves the N-terminal amino acid of tripeptides. The chain is Peptidase T from Salmonella paratyphi C (strain RKS4594).